The sequence spans 529 residues: Zinc finger CCCH domain-containing protein 65 (529 aa).

Basic and acidic residues predominate over residues 1 to 10 (MADADARAPP). Disordered regions lie at residues 1 to 36 (MADA…EDEV) and 134 to 179 (PARK…GSYV). Residues 14 to 31 (PGATPIGSISPSSAAPAA) are compositionally biased toward low complexity. 3 C3H1-type zinc fingers span residues 108-136 (RPGE…HPAR), 237-265 (GSSQ…HRDG), and 285-313 (RPGE…HPDP). Positions 313–347 (PSNVASKDPQLEHENGDAPQQDVQGSSSQPNASIW) are disordered. Polar residues predominate over residues 333–344 (QDVQGSSSQPNA). C3H1-type zinc fingers lie at residues 433–461 (RPGQ…HPRS) and 477–505 (KPDQ…HPFN).

This chain is Zinc finger CCCH domain-containing protein 65, found in Oryza sativa subsp. japonica (Rice).